The primary structure comprises 190 residues: Small ribosomal subunit protein uS5 (190 aa).

Positions 22–85 (FVDKLVHINR…ESAKRNLTRV (64 aa)) constitute an S5 DRBM domain.

Belongs to the universal ribosomal protein uS5 family. As to quaternary structure, part of the 30S ribosomal subunit. Contacts proteins S4 and S8.

In terms of biological role, with S4 and S12 plays an important role in translational accuracy. Located at the back of the 30S subunit body where it stabilizes the conformation of the head with respect to the body. The chain is Small ribosomal subunit protein uS5 from Rhodopseudomonas palustris (strain BisA53).